A 166-amino-acid chain; its full sequence is Small ribosomal subunit protein uS5 (166 aa).

The S5 DRBM domain occupies L11–V74.

It belongs to the universal ribosomal protein uS5 family. As to quaternary structure, part of the 30S ribosomal subunit. Contacts proteins S4 and S8.

In terms of biological role, with S4 and S12 plays an important role in translational accuracy. Functionally, located at the back of the 30S subunit body where it stabilizes the conformation of the head with respect to the body. The protein is Small ribosomal subunit protein uS5 of Aeromonas hydrophila subsp. hydrophila (strain ATCC 7966 / DSM 30187 / BCRC 13018 / CCUG 14551 / JCM 1027 / KCTC 2358 / NCIMB 9240 / NCTC 8049).